The sequence spans 640 residues: WW domain-binding protein 11 (640 aa).

Residues M1 to S11 show a composition bias toward polar residues. A disordered region spans residues M1–R37. Positions R28–R37 are enriched in basic residues. The stretch at E75 to S122 forms a coiled coil. 3 disordered regions span residues D155–G174, V187–K563, and R582–K625. Over residues R194–Q207 the composition is skewed to pro residues. A compositionally biased stretch (basic and acidic residues) spans D230–E240. The segment covering A241–S251 has biased composition (acidic residues). Positions S252–T274 are enriched in basic and acidic residues. A Phosphoserine modification is found at S285. Residues P315 to A338 are compositionally biased toward acidic residues. The span at A356 to P371 shows a compositional bias: low complexity. Composition is skewed to pro residues over residues I372–L412 and R422–N491. The PGR motif lies at P421–R432. Positions G547–A558 are enriched in gly residues. Basic and acidic residues predominate over residues D586 to P599. The segment covering Q603–A616 has biased composition (low complexity).

Its subcellular location is the cytoplasm. The protein localises to the nucleus. Activates pre-mRNA splicing. This chain is WW domain-binding protein 11 (wbp11), found in Danio rerio (Zebrafish).